Here is a 90-residue protein sequence, read N- to C-terminus: U7-theraphotoxin-Hhn1a 5 (90 aa).

An N-terminal signal peptide occupies residues 1–19 (MKTAIFTVVLALAVFAVLS). Residues 20-50 (FGWEANEKALSEESTELIHEKEAASETEARE) constitute a propeptide that is removed on maturation. Cystine bridges form between Cys-51–Cys-65, Cys-58–Cys-70, and Cys-64–Cys-81.

This sequence belongs to the neurotoxin 10 (Hwtx-1) family. 13 (Hntx-13) subfamily. As to expression, expressed by the venom gland.

It localises to the secreted. Ion channel inhibitor. The chain is U7-theraphotoxin-Hhn1a 5 from Cyriopagopus hainanus (Chinese bird spider).